A 182-amino-acid polypeptide reads, in one-letter code: UPF0301 protein NMB1336 (182 aa).

Belongs to the UPF0301 (AlgH) family.

This chain is UPF0301 protein NMB1336, found in Neisseria meningitidis serogroup B (strain ATCC BAA-335 / MC58).